Here is a 201-residue protein sequence, read N- to C-terminus: Oligoribonuclease (201 aa).

The Exonuclease domain occupies 20 to 183; that stretch reads LVWLDMEMTG…ADIHESIDEL (164 aa). Tyr141 is a catalytic residue.

The protein belongs to the oligoribonuclease family.

It is found in the cytoplasm. Functionally, 3'-to-5' exoribonuclease specific for small oligoribonucleotides. The protein is Oligoribonuclease of Burkholderia pseudomallei (strain 1106a).